We begin with the raw amino-acid sequence, 407 residues long: 1-deoxy-D-xylulose 5-phosphate reductoisomerase (407 aa).

The NADPH site is built by Thr22, Gly23, Ser24, Ile25, Gly48, Asn51, and Asn128. Position 129 (Lys129) interacts with 1-deoxy-D-xylulose 5-phosphate. Glu130 contributes to the NADPH binding site. Mn(2+) is bound at residue Asp152. Residues Ser153, Glu154, Ser178, and His201 each coordinate 1-deoxy-D-xylulose 5-phosphate. A Mn(2+)-binding site is contributed by Glu154. Gly207 contacts NADPH. 1-deoxy-D-xylulose 5-phosphate contacts are provided by Ser214, Asn219, Lys220, and Glu223. Glu223 contributes to the Mn(2+) binding site.

The protein belongs to the DXR family. Requires Mg(2+) as cofactor. The cofactor is Mn(2+).

The catalysed reaction is 2-C-methyl-D-erythritol 4-phosphate + NADP(+) = 1-deoxy-D-xylulose 5-phosphate + NADPH + H(+). It functions in the pathway isoprenoid biosynthesis; isopentenyl diphosphate biosynthesis via DXP pathway; isopentenyl diphosphate from 1-deoxy-D-xylulose 5-phosphate: step 1/6. Functionally, catalyzes the NADPH-dependent rearrangement and reduction of 1-deoxy-D-xylulose-5-phosphate (DXP) to 2-C-methyl-D-erythritol 4-phosphate (MEP). The polypeptide is 1-deoxy-D-xylulose 5-phosphate reductoisomerase (Mycobacterium avium (strain 104)).